The sequence spans 84 residues: Small ribosomal subunit protein bS16 (84 aa).

Belongs to the bacterial ribosomal protein bS16 family.

In Desulforapulum autotrophicum (strain ATCC 43914 / DSM 3382 / VKM B-1955 / HRM2) (Desulfobacterium autotrophicum), this protein is Small ribosomal subunit protein bS16.